Reading from the N-terminus, the 183-residue chain is Ubiquitin-conjugating enzyme E2 H (183 aa).

Residues 1 to 150 (MSSPSPGKRR…IKEYIQKYAT (150 aa)) enclose the UBC core domain. N6-acetyllysine is present on K60. The Glycyl thioester intermediate role is filled by C87. Positions 152-183 (EALKEQEEGTGDSSSESSMSDFSEDEAQDMEL) are disordered. Low complexity predominate over residues 163-172 (DSSSESSMSD). The segment covering 173–183 (FSEDEAQDMEL) has biased composition (acidic residues).

This sequence belongs to the ubiquitin-conjugating enzyme family. Interacts with MAEA and WDR26, components of the CTLH complex that contains GID4, RANBP9 and/or RANBP10, MKLN1, MAEA, RMND5A (or alternatively its paralog RMND5B), GID8, ARMC8, WDR26 and YPEL5. Post-translationally, autoubiquitinated in vitro in the presence of NEDD4L.

The enzyme catalyses S-ubiquitinyl-[E1 ubiquitin-activating enzyme]-L-cysteine + [E2 ubiquitin-conjugating enzyme]-L-cysteine = [E1 ubiquitin-activating enzyme]-L-cysteine + S-ubiquitinyl-[E2 ubiquitin-conjugating enzyme]-L-cysteine.. The catalysed reaction is S-ubiquitinyl-[E1 ubiquitin-activating enzyme]-L-cysteine + [acceptor protein]-L-lysine = [E1 ubiquitin-activating enzyme]-L-cysteine + N(6)-monoubiquitinyl-[acceptor protein]-L-lysine.. The protein operates within protein modification; protein ubiquitination. Functionally, accepts ubiquitin from the E1 complex and catalyzes its covalent attachment to other proteins. E2 ubiquitin conjugating enzyme that transfers ubiquitin to MAEA, a core component of the CTLH E3 ubiquitin-protein ligase complex. In vitro catalyzes 'Lys-11'- and 'Lys-48'-linked polyubiquitination. Capable, in vitro, to ubiquitinate histone H2A. In Homo sapiens (Human), this protein is Ubiquitin-conjugating enzyme E2 H (UBE2H).